A 256-amino-acid chain; its full sequence is MLFYGTELKSRLMLGTAQYPSPEILSDAVRAAEAGVVTVSLRRESAGQRAGQAFWSMIRDLGVPVLPNTAGCHTVKEAVTTAHMAREVFDTDWIKLEVIGESDTLQPDMFGLVEAARILSRDGFKVFPYMTEDLVGAERLLQAGCEVLMPWGAPIGSGKGLNNVFGLRALRAHFPDVPLVVDAGIGLPSHAAQAMELGYDAVLINTAVAKAGDPVRMARAFRLAVEAGLIAREADPIEERDMAAPSTPVLGRAMLA.

The Schiff-base intermediate with DXP role is filled by Lys95. 1-deoxy-D-xylulose 5-phosphate contacts are provided by residues Gly156, 183 to 184, and 205 to 206; these read AG and NT.

This sequence belongs to the ThiG family. Homotetramer. Forms heterodimers with either ThiH or ThiS.

It localises to the cytoplasm. It catalyses the reaction [ThiS sulfur-carrier protein]-C-terminal-Gly-aminoethanethioate + 2-iminoacetate + 1-deoxy-D-xylulose 5-phosphate = [ThiS sulfur-carrier protein]-C-terminal Gly-Gly + 2-[(2R,5Z)-2-carboxy-4-methylthiazol-5(2H)-ylidene]ethyl phosphate + 2 H2O + H(+). The protein operates within cofactor biosynthesis; thiamine diphosphate biosynthesis. Its function is as follows. Catalyzes the rearrangement of 1-deoxy-D-xylulose 5-phosphate (DXP) to produce the thiazole phosphate moiety of thiamine. Sulfur is provided by the thiocarboxylate moiety of the carrier protein ThiS. In vitro, sulfur can be provided by H(2)S. In Gluconacetobacter diazotrophicus (strain ATCC 49037 / DSM 5601 / CCUG 37298 / CIP 103539 / LMG 7603 / PAl5), this protein is Thiazole synthase.